We begin with the raw amino-acid sequence, 508 residues long: Photosystem II CP47 reaction center protein (508 aa).

The next 6 helical transmembrane spans lie at 21–36 (SVHL…WAGS), 101–115 (IILS…IWHW), 140–156 (GVHL…FGVF), 203–218 (IAAG…FHVL), 237–252 (VLSS…AFVV), and 457–472 (SFAL…HGAR).

Belongs to the PsbB/PsbC family. PsbB subfamily. In terms of assembly, PSII is composed of 1 copy each of membrane proteins PsbA, PsbB, PsbC, PsbD, PsbE, PsbF, PsbH, PsbI, PsbJ, PsbK, PsbL, PsbM, PsbT, PsbY, PsbZ, Psb30/Ycf12, at least 3 peripheral proteins of the oxygen-evolving complex and a large number of cofactors. It forms dimeric complexes. The cofactor is Binds multiple chlorophylls. PSII binds additional chlorophylls, carotenoids and specific lipids..

The protein localises to the plastid. It is found in the chloroplast thylakoid membrane. Its function is as follows. One of the components of the core complex of photosystem II (PSII). It binds chlorophyll and helps catalyze the primary light-induced photochemical processes of PSII. PSII is a light-driven water:plastoquinone oxidoreductase, using light energy to abstract electrons from H(2)O, generating O(2) and a proton gradient subsequently used for ATP formation. This is Photosystem II CP47 reaction center protein from Euglena gracilis.